The following is a 500-amino-acid chain: Serine carboxypeptidase 3 (500 aa).

The N-terminal stretch at 1–21 (MATARVSLILLVVVLAASACA) is a signal peptide. The propeptide occupies 22 to 73 (EGLRLPRDAKFPAAQAERLIRSLNLLPKEAGPTGAGDVPSVAPGELLERRVT). Intrachain disulfides connect C126-C366, C294-C309, and C332-C337. N-linked (GlcNAc...) asparagine glycosylation is present at N144. S216 is an active-site residue. D404 is a catalytic residue. Residue C407 participates in substrate binding. H461 is a catalytic residue. Positions 485–500 (EEWLAELPEQPMYAAM) are excised as a propeptide.

It belongs to the peptidase S10 family. As to quaternary structure, monomer.

The enzyme catalyses Release of a C-terminal amino acid with broad specificity.. The polypeptide is Serine carboxypeptidase 3 (CBP3) (Oryza sativa subsp. japonica (Rice)).